Here is a 329-residue protein sequence, read N- to C-terminus: IDS-like terpene synthase 1 (329 aa).

Positions 79 and 83 each coordinate Mg(2+).

Belongs to the FPP/GGPP synthase family. The cofactor is Mg(2+).

The enzyme catalyses (2E)-geranyl diphosphate + H2O = linalool + diphosphate. It carries out the reaction (2E,6E)-farnesyl diphosphate + H2O = (6E)-nerolidol + diphosphate. Functionally, terpene synthase that shows monoterpene synthase activity and produces linalool, using geranyl diphosphate (GPP) as substrate. Also shows sesquiterpene synthase activity as it is able to convert farnesyl diphosphate (FPP) into (E)-nerolidol. This is IDS-like terpene synthase 1 from Melampsora lini (Rust fungus).